Here is a 330-residue protein sequence, read N- to C-terminus: Aspartate--ammonia ligase (330 aa).

This sequence belongs to the class-II aminoacyl-tRNA synthetase family. AsnA subfamily.

It is found in the cytoplasm. The catalysed reaction is L-aspartate + NH4(+) + ATP = L-asparagine + AMP + diphosphate + H(+). Its pathway is amino-acid biosynthesis; L-asparagine biosynthesis; L-asparagine from L-aspartate (ammonia route): step 1/1. The protein is Aspartate--ammonia ligase of Serratia proteamaculans (strain 568).